Consider the following 226-residue polypeptide: Putative N-acetylmannosamine-6-phosphate 2-epimerase (226 aa).

This sequence belongs to the NanE family.

The enzyme catalyses an N-acyl-D-glucosamine 6-phosphate = an N-acyl-D-mannosamine 6-phosphate. The protein operates within amino-sugar metabolism; N-acetylneuraminate degradation; D-fructose 6-phosphate from N-acetylneuraminate: step 3/5. Functionally, converts N-acetylmannosamine-6-phosphate (ManNAc-6-P) to N-acetylglucosamine-6-phosphate (GlcNAc-6-P). This chain is Putative N-acetylmannosamine-6-phosphate 2-epimerase, found in Mycoplasma mycoides subsp. mycoides SC (strain CCUG 32753 / NCTC 10114 / PG1).